The following is a 210-amino-acid chain: Prolactin-2 (210 aa).

Positions 1–23 are cleaved as a signal peptide; that stretch reads MARRSQGTKLHLAVLCLVVSCHA. 2 disulfides stabilise this stretch: cysteine 69–cysteine 183 and cysteine 200–cysteine 210.

Belongs to the somatotropin/prolactin family.

It is found in the secreted. In Oncorhynchus tshawytscha (Chinook salmon), this protein is Prolactin-2 (prl2).